Consider the following 459-residue polypeptide: Argininosuccinate lyase (459 aa).

The protein belongs to the lyase 1 family. Argininosuccinate lyase subfamily.

The protein resides in the cytoplasm. It carries out the reaction 2-(N(omega)-L-arginino)succinate = fumarate + L-arginine. It participates in amino-acid biosynthesis; L-arginine biosynthesis; L-arginine from L-ornithine and carbamoyl phosphate: step 3/3. The chain is Argininosuccinate lyase from Bacillus licheniformis (strain ATCC 14580 / DSM 13 / JCM 2505 / CCUG 7422 / NBRC 12200 / NCIMB 9375 / NCTC 10341 / NRRL NRS-1264 / Gibson 46).